We begin with the raw amino-acid sequence, 181 residues long: Adenylate kinase (181 aa).

10–15 (GAGKGT) serves as a coordination point for ATP. An NMP region spans residues 30-59 (STGDLFRDNITNETELGVEAKRYLDAGDLV). Residues Thr-31, Arg-36, 57–59 (DLV), 85–88 (GYPR), and Gln-92 each bind AMP. An LID region spans residues 126-132 (GRGRADD). Arg-127 provides a ligand contact to ATP. AMP contacts are provided by Arg-129 and Arg-140. Gly-166 lines the ATP pocket.

Belongs to the adenylate kinase family. Monomer.

The protein resides in the cytoplasm. It catalyses the reaction AMP + ATP = 2 ADP. The protein operates within purine metabolism; AMP biosynthesis via salvage pathway; AMP from ADP: step 1/1. Functionally, catalyzes the reversible transfer of the terminal phosphate group between ATP and AMP. Plays an important role in cellular energy homeostasis and in adenine nucleotide metabolism. The polypeptide is Adenylate kinase (Mycobacterium sp. (strain MCS)).